The sequence spans 56 residues: MIKVKLVRSRIGCNPNQRRTLDALGLRKIRQEKTFEDNAVVRGMIAKVVHLVEVTE.

This sequence belongs to the universal ribosomal protein uL30 family. In terms of assembly, part of the 50S ribosomal subunit.

The polypeptide is Large ribosomal subunit protein uL30 (Oleidesulfovibrio alaskensis (strain ATCC BAA-1058 / DSM 17464 / G20) (Desulfovibrio alaskensis)).